The following is a 366-amino-acid chain: tRNA/tmRNA (uracil-C(5))-methyltransferase (366 aa).

S-adenosyl-L-methionine contacts are provided by Gln189, Tyr217, Asn222, Glu238, and Asp298. The active-site Nucleophile is Cys323. The Proton acceptor role is filled by Glu357.

This sequence belongs to the class I-like SAM-binding methyltransferase superfamily. RNA M5U methyltransferase family. TrmA subfamily.

The enzyme catalyses uridine(54) in tRNA + S-adenosyl-L-methionine = 5-methyluridine(54) in tRNA + S-adenosyl-L-homocysteine + H(+). It carries out the reaction uridine(341) in tmRNA + S-adenosyl-L-methionine = 5-methyluridine(341) in tmRNA + S-adenosyl-L-homocysteine + H(+). Its function is as follows. Dual-specificity methyltransferase that catalyzes the formation of 5-methyluridine at position 54 (m5U54) in all tRNAs, and that of position 341 (m5U341) in tmRNA (transfer-mRNA). This is tRNA/tmRNA (uracil-C(5))-methyltransferase from Photorhabdus laumondii subsp. laumondii (strain DSM 15139 / CIP 105565 / TT01) (Photorhabdus luminescens subsp. laumondii).